A 207-amino-acid polypeptide reads, in one-letter code: Guanylate kinase (207 aa).

The 181-residue stretch at 4–184 (GTLYIVSAPS…ALSDLKTIIR (181 aa)) folds into the Guanylate kinase-like domain. 11-18 (APSGAGKS) is an ATP binding site.

This sequence belongs to the guanylate kinase family.

Its subcellular location is the cytoplasm. The enzyme catalyses GMP + ATP = GDP + ADP. Its function is as follows. Essential for recycling GMP and indirectly, cGMP. The polypeptide is Guanylate kinase (Salmonella paratyphi A (strain ATCC 9150 / SARB42)).